Here is a 380-residue protein sequence, read N- to C-terminus: Glucose-1-phosphate adenylyltransferase (380 aa).

Alpha-D-glucose 1-phosphate is bound by residues Gly164, 179-180 (EK), and Ser190.

Belongs to the bacterial/plant glucose-1-phosphate adenylyltransferase family. In terms of assembly, homotetramer.

It catalyses the reaction alpha-D-glucose 1-phosphate + ATP + H(+) = ADP-alpha-D-glucose + diphosphate. The protein operates within glycan biosynthesis; glycogen biosynthesis. In terms of biological role, involved in the biosynthesis of ADP-glucose, a building block required for the elongation reactions to produce glycogen. Catalyzes the reaction between ATP and alpha-D-glucose 1-phosphate (G1P) to produce pyrophosphate and ADP-Glc. In Lactococcus lactis subsp. lactis (strain IL1403) (Streptococcus lactis), this protein is Glucose-1-phosphate adenylyltransferase.